Reading from the N-terminus, the 312-residue chain is Protein ABIL2 (312 aa).

The tract at residues 173–287 (TIRETPPPPV…TEQQQPSKSK (115 aa)) is disordered. Residues 183-199 (RKSTSQSSSPRQPPQRS) are compositionally biased toward low complexity. A compositionally biased stretch (polar residues) spans 230–251 (SVATRKSASISRPTTPSKSRSI). Basic and acidic residues predominate over residues 269–279 (AFEKDNQKETE).

Belongs to the ABI family. In terms of assembly, binds SCAR.

It localises to the cytoplasm. The protein localises to the cytoskeleton. Functionally, involved in regulation of actin and microtubule organization. Part of a WAVE complex that activates the Arp2/3 complex. In Arabidopsis thaliana (Mouse-ear cress), this protein is Protein ABIL2 (ABIL2).